Here is a 282-residue protein sequence, read N- to C-terminus: tRNA pseudouridine synthase B (282 aa).

Residue Asp-39 is the Nucleophile of the active site.

The protein belongs to the pseudouridine synthase TruB family. Type 1 subfamily.

The enzyme catalyses uridine(55) in tRNA = pseudouridine(55) in tRNA. Functionally, responsible for synthesis of pseudouridine from uracil-55 in the psi GC loop of transfer RNAs. The polypeptide is tRNA pseudouridine synthase B (Borreliella afzelii (strain PKo) (Borrelia afzelii)).